Here is a 348-residue protein sequence, read N- to C-terminus: Protein RecA (348 aa).

64–71 provides a ligand contact to ATP; the sequence is GPESSGKT.

It belongs to the RecA family. As to quaternary structure, monomer; forms higher-order oligomers. Interacts with RecU. Interacts with DprA (smf). Interacts with RecD2.

The protein resides in the cytoplasm. It localises to the nucleoid. In terms of biological role, multifunctional protein involved in homologous recombination, DNA repair and competence. Can catalyze the hydrolysis of (d)ATP in the presence of single-stranded (ss)DNA; prefers dATP at least in vitro, catalyzes the dATP-dependent uptake of ssDNA by duplex DNA, and the dATP-dependent hybridization of homologous ssDNA (strand exchange). RecA-ATP cannot catalyze homologous DNA strand exchange; SsbA and DprA activate strand exchange by RecA-ATP. It interacts with LexA causing its activation and leading to its autocatalytic cleavage. Hydrolysis of ATP in the presence of ssDNA is partially inhibited by RecU. Required for DNA transformation; protects transforming DNA from degradation, possibly in combination with DprA. Blocks replication of both leading and lagging strand DNA in the presence of RecO and SsbA; RecD2 is able to overcome this blockage. Functionally, recruited to repair centers (RCs), foci that are the site of double-stranded DNA break(s), after RecN. Concomitant with the appearance of RecO at the RCs, RecA forms threads that extend from RCs toward the opposite cell half, possibly searching for sequence homology along the sister chromosome. The threads disappear after about 2 hours. Thread formation is absolutely dependent on RecJ or AadAB. Thread formation is also dependent on RarA. This Bacillus subtilis (strain 168) protein is Protein RecA.